The primary structure comprises 318 residues: ADP-L-glycero-D-manno-heptose-6-epimerase (318 aa).

NADP(+)-binding positions include 10-11 (FI), 31-32 (DN), Lys38, Lys53, 76-80 (QGACS), and Asn93. Residue Tyr141 is the Proton acceptor of the active site. Residue Lys145 coordinates NADP(+). Residue Asn172 participates in substrate binding. Residues Val173 and Lys181 each coordinate NADP(+). The Proton acceptor role is filled by Lys181. Substrate is bound by residues Arg183, His190, 204–207 (FEGS), Arg212, and Tyr276.

The protein belongs to the NAD(P)-dependent epimerase/dehydratase family. HldD subfamily. In terms of assembly, homopentamer. Requires NADP(+) as cofactor.

It catalyses the reaction ADP-D-glycero-beta-D-manno-heptose = ADP-L-glycero-beta-D-manno-heptose. It participates in nucleotide-sugar biosynthesis; ADP-L-glycero-beta-D-manno-heptose biosynthesis; ADP-L-glycero-beta-D-manno-heptose from D-glycero-beta-D-manno-heptose 7-phosphate: step 4/4. Its function is as follows. Catalyzes the interconversion between ADP-D-glycero-beta-D-manno-heptose and ADP-L-glycero-beta-D-manno-heptose via an epimerization at carbon 6 of the heptose. The chain is ADP-L-glycero-D-manno-heptose-6-epimerase from Brachyspira hyodysenteriae (strain ATCC 49526 / WA1).